The chain runs to 68 residues: Large ribosomal subunit protein bL35 (68 aa).

The protein belongs to the bacterial ribosomal protein bL35 family.

The protein is Large ribosomal subunit protein bL35 of Rickettsia canadensis (strain McKiel).